A 536-amino-acid chain; its full sequence is Apoptosis inhibitor 5 homolog (536 aa).

Residues 462-536 (ITFGEKAAAN…GYRNRRFNKY (75 aa)) form a disordered region. The segment covering 472–487 (GKDKDQEPEKKSRPSN) has biased composition (basic and acidic residues). Over residues 498-507 (KYSNKVNQSY) the composition is skewed to polar residues. Over residues 516 to 528 (RGGGGGGGSGGGY) the composition is skewed to gly residues.

It belongs to the API5 family.

The protein resides in the nucleus. Its function is as follows. Antiapoptotic factor. Also known to efficiently suppress E2F1-induced apoptosis. In Drosophila melanogaster (Fruit fly), this protein is Apoptosis inhibitor 5 homolog.